The sequence spans 586 residues: Protein NRT1/ PTR FAMILY 5.3 (586 aa).

The next 11 membrane-spanning stretches (helical) occupy residues 77 to 97 (WVGTSWLTPILGAYVADAHFG), 100 to 120 (ITFVISSAIYLLGMALLTLSV), 141 to 161 (ASVIQLAVFFGALYTLAIGTG), 189 to 209 (FFNWWMFSIFFGTFFATTVLV), 217 to 237 (WAIGYGLSTLGLAFSIFIFLL), 334 to 354 (PVLFVTFVPSMMLAQIMTLFI), 370 to 390 (IPPASLLGFTTFSMLVSIVIY), 408 to 428 (ITLLQRMGIGMILHILIMIIA), 449 to 469 (AVPIPLSIFTLLPQYVLMGLA), 492 to 512 (LGTSYTSTSMAVGYFMSSILL), and 538 to 558 (NYYMFFAVLNLLNFILFLVVI).

It belongs to the major facilitator superfamily. Proton-dependent oligopeptide transporter (POT/PTR) (TC 2.A.17) family. Expressed in roots and siliques.

The protein localises to the membrane. In terms of biological role, peptide transporter. This is Protein NRT1/ PTR FAMILY 5.3 (NPF5.3) from Arabidopsis thaliana (Mouse-ear cress).